The primary structure comprises 739 residues: Phosphoribosylformylglycinamidine synthase subunit PurL (739 aa).

The active site involves His53. 2 residues coordinate ATP: Tyr56 and Lys95. Glu97 lines the Mg(2+) pocket. Substrate-binding positions include 98 to 101 and Arg120; that span reads SHNH. His99 functions as the Proton acceptor in the catalytic mechanism. A Mg(2+)-binding site is contributed by Asp121. Gln244 lines the substrate pocket. Asp274 lines the Mg(2+) pocket. 318–320 provides a ligand contact to substrate; that stretch reads ESQ. The ATP site is built by Asp501 and Gly538. Asn539 contacts Mg(2+). A substrate-binding site is contributed by Ser541.

This sequence belongs to the FGAMS family. In terms of assembly, monomer. Part of the FGAM synthase complex composed of 1 PurL, 1 PurQ and 2 PurS subunits.

It localises to the cytoplasm. The catalysed reaction is N(2)-formyl-N(1)-(5-phospho-beta-D-ribosyl)glycinamide + L-glutamine + ATP + H2O = 2-formamido-N(1)-(5-O-phospho-beta-D-ribosyl)acetamidine + L-glutamate + ADP + phosphate + H(+). The protein operates within purine metabolism; IMP biosynthesis via de novo pathway; 5-amino-1-(5-phospho-D-ribosyl)imidazole from N(2)-formyl-N(1)-(5-phospho-D-ribosyl)glycinamide: step 1/2. Part of the phosphoribosylformylglycinamidine synthase complex involved in the purines biosynthetic pathway. Catalyzes the ATP-dependent conversion of formylglycinamide ribonucleotide (FGAR) and glutamine to yield formylglycinamidine ribonucleotide (FGAM) and glutamate. The FGAM synthase complex is composed of three subunits. PurQ produces an ammonia molecule by converting glutamine to glutamate. PurL transfers the ammonia molecule to FGAR to form FGAM in an ATP-dependent manner. PurS interacts with PurQ and PurL and is thought to assist in the transfer of the ammonia molecule from PurQ to PurL. This Listeria innocua serovar 6a (strain ATCC BAA-680 / CLIP 11262) protein is Phosphoribosylformylglycinamidine synthase subunit PurL.